A 429-amino-acid chain; its full sequence is GDP-fucose protein O-fucosyltransferase 2 (429 aa).

A signal peptide spans 1-21 (MATLSFVFLLLGAVSWPPASA). 53–57 (PEGFN) provides a ligand contact to GDP-beta-L-fucose. The Proton acceptor role is filled by Glu54. Cys161 and Cys192 are disulfide-bonded. Asn189, Asn209, and Asn259 each carry an N-linked (GlcNAc...) asparagine glycan. GDP-beta-L-fucose contacts are provided by residues 292–294 (HLR), Asp371, and 388–389 (TF). Cys412 and Cys419 are oxidised to a cystine.

The protein belongs to the glycosyltransferase 68 family.

It localises to the endoplasmic reticulum. Its subcellular location is the golgi apparatus. It carries out the reaction L-seryl-[protein] + GDP-beta-L-fucose = 3-O-(alpha-L-fucosyl)-L-seryl-[protein] + GDP + H(+). The catalysed reaction is L-threonyl-[protein] + GDP-beta-L-fucose = 3-O-(alpha-L-fucosyl)-L-threonyl-[protein] + GDP + H(+). The protein operates within protein modification; protein glycosylation. Catalyzes the reaction that attaches fucose through an O-glycosidic linkage to a conserved serine or threonine residue in the consensus sequence C1-X-X-S/T-C2 of thrombospondin type I repeats (TSRs) where C1 and C2 are the first and second cysteines of the repeat, respectively. O-fucosylates members of several protein families including the ADAMTS, the thrombospondin (TSP) and spondin families. Required for the proper secretion of ADAMTS family members such as ADAMTSL1 and ADAMTS13. The O-fucosylation of TSRs is also required for restricting epithelial to mesenchymal transition (EMT), maintaining the correct patterning of mesoderm and localization of the definite endoderm. This is GDP-fucose protein O-fucosyltransferase 2 (POFUT2) from Pan troglodytes (Chimpanzee).